Here is a 449-residue protein sequence, read N- to C-terminus: Phosphoglucosamine mutase (449 aa).

Catalysis depends on serine 101, which acts as the Phosphoserine intermediate. Mg(2+) contacts are provided by serine 101, aspartate 242, aspartate 244, and aspartate 246. Phosphoserine is present on serine 101.

Belongs to the phosphohexose mutase family. Mg(2+) serves as cofactor. In terms of processing, activated by phosphorylation.

The catalysed reaction is alpha-D-glucosamine 1-phosphate = D-glucosamine 6-phosphate. In terms of biological role, catalyzes the conversion of glucosamine-6-phosphate to glucosamine-1-phosphate. The polypeptide is Phosphoglucosamine mutase (Hyphomonas neptunium (strain ATCC 15444)).